The following is a 1073-amino-acid chain: Carbamoyl phosphate synthase large chain (1073 aa).

The carboxyphosphate synthetic domain stretch occupies residues 1 to 403 (MPKRTDIKSI…SLQKALRGLE (403 aa)). The ATP site is built by Arg129, Arg169, Gly175, Gly176, Glu208, Leu210, Glu215, Gly241, Val242, His243, Gln285, and Glu299. The ATP-grasp 1 domain occupies 133–328 (DKAMKDIGLE…IAKIAAKLAI (196 aa)). Gln285, Glu299, and Asn301 together coordinate Mg(2+). Mn(2+) is bound by residues Gln285, Glu299, and Asn301. The tract at residues 404-553 (VGACGLDPKV…YSTYEEECEA (150 aa)) is oligomerization domain. Positions 554 to 935 (NPSTRDKIMI…AFAKAQMGAS (382 aa)) are carbamoyl phosphate synthetic domain. The 192-residue stretch at 678–869 (QQMVQRLSLL…LAMIAARVMA (192 aa)) folds into the ATP-grasp 2 domain. ATP-binding residues include Arg714, His753, Leu755, Glu760, Gly785, Val786, His787, Ser788, Gln828, and Glu840. The Mg(2+) site is built by Gln828, Glu840, and Asn842. Positions 828, 840, and 842 each coordinate Mn(2+). Residues 936–1073 (EVLPTGGTAF…LQDLHAGLKA (138 aa)) enclose the MGS-like domain. Residues 936–1073 (EVLPTGGTAF…LQDLHAGLKA (138 aa)) form an allosteric domain region.

This sequence belongs to the CarB family. As to quaternary structure, composed of two chains; the small (or glutamine) chain promotes the hydrolysis of glutamine to ammonia, which is used by the large (or ammonia) chain to synthesize carbamoyl phosphate. Tetramer of heterodimers (alpha,beta)4. It depends on Mg(2+) as a cofactor. Mn(2+) serves as cofactor.

The enzyme catalyses hydrogencarbonate + L-glutamine + 2 ATP + H2O = carbamoyl phosphate + L-glutamate + 2 ADP + phosphate + 2 H(+). It catalyses the reaction hydrogencarbonate + NH4(+) + 2 ATP = carbamoyl phosphate + 2 ADP + phosphate + 2 H(+). It participates in amino-acid biosynthesis; L-arginine biosynthesis; carbamoyl phosphate from bicarbonate: step 1/1. Its pathway is pyrimidine metabolism; UMP biosynthesis via de novo pathway; (S)-dihydroorotate from bicarbonate: step 1/3. In terms of biological role, large subunit of the glutamine-dependent carbamoyl phosphate synthetase (CPSase). CPSase catalyzes the formation of carbamoyl phosphate from the ammonia moiety of glutamine, carbonate, and phosphate donated by ATP, constituting the first step of 2 biosynthetic pathways, one leading to arginine and/or urea and the other to pyrimidine nucleotides. The large subunit (synthetase) binds the substrates ammonia (free or transferred from glutamine from the small subunit), hydrogencarbonate and ATP and carries out an ATP-coupled ligase reaction, activating hydrogencarbonate by forming carboxy phosphate which reacts with ammonia to form carbamoyl phosphate. This Pseudomonas putida (strain ATCC 47054 / DSM 6125 / CFBP 8728 / NCIMB 11950 / KT2440) protein is Carbamoyl phosphate synthase large chain.